Here is a 250-residue protein sequence, read N- to C-terminus: 2,3-bisphosphoglycerate-dependent phosphoglycerate mutase (250 aa).

Substrate-binding positions include 8–15 (RHGESQWN), 21–22 (TG), arginine 60, 87–90 (ERHY), lysine 98, 114–115 (RR), and 183–184 (GN). The Tele-phosphohistidine intermediate role is filled by histidine 9. Glutamate 87 functions as the Proton donor/acceptor in the catalytic mechanism.

Belongs to the phosphoglycerate mutase family. BPG-dependent PGAM subfamily. Homodimer.

It catalyses the reaction (2R)-2-phosphoglycerate = (2R)-3-phosphoglycerate. It functions in the pathway carbohydrate degradation; glycolysis; pyruvate from D-glyceraldehyde 3-phosphate: step 3/5. Its function is as follows. Catalyzes the interconversion of 2-phosphoglycerate and 3-phosphoglycerate. In Bordetella pertussis (strain Tohama I / ATCC BAA-589 / NCTC 13251), this protein is 2,3-bisphosphoglycerate-dependent phosphoglycerate mutase.